The primary structure comprises 607 residues: Glutamine--fructose-6-phosphate aminotransferase [isomerizing] (607 aa).

C2 functions as the Nucleophile; for GATase activity in the catalytic mechanism. The Glutamine amidotransferase type-2 domain maps to 2–217 (CGIIGILGKK…DGDWAVLTRE (216 aa)). 2 SIS domains span residues 277–422 (TVRS…QRGS) and 455–597 (ICRD…VDQP). K602 acts as the For Fru-6P isomerization activity in catalysis.

In terms of assembly, homodimer.

Its subcellular location is the cytoplasm. The enzyme catalyses D-fructose 6-phosphate + L-glutamine = D-glucosamine 6-phosphate + L-glutamate. Functionally, catalyzes the first step in hexosamine metabolism, converting fructose-6P into glucosamine-6P using glutamine as a nitrogen source. The polypeptide is Glutamine--fructose-6-phosphate aminotransferase [isomerizing] (Bartonella quintana (strain Toulouse) (Rochalimaea quintana)).